The primary structure comprises 271 residues: NADPH-dependent 7-cyano-7-deazaguanine reductase (271 aa).

Ile81–Ser83 is a binding site for substrate. An NADPH-binding site is contributed by Ser83–Lys84. Catalysis depends on Cys177, which acts as the Thioimide intermediate. Asp184 functions as the Proton donor in the catalytic mechanism. A substrate-binding site is contributed by His216 to Glu217. Residue Arg245–Gly246 coordinates NADPH.

This sequence belongs to the GTP cyclohydrolase I family. QueF type 2 subfamily. In terms of assembly, homodimer.

Its subcellular location is the cytoplasm. The enzyme catalyses 7-aminomethyl-7-carbaguanine + 2 NADP(+) = 7-cyano-7-deazaguanine + 2 NADPH + 3 H(+). The protein operates within tRNA modification; tRNA-queuosine biosynthesis. Functionally, catalyzes the NADPH-dependent reduction of 7-cyano-7-deazaguanine (preQ0) to 7-aminomethyl-7-deazaguanine (preQ1). This is NADPH-dependent 7-cyano-7-deazaguanine reductase from Xanthomonas campestris pv. campestris (strain B100).